The following is a 92-amino-acid chain: Small ribosomal subunit protein uS19 (92 aa).

Belongs to the universal ribosomal protein uS19 family.

Its function is as follows. Protein S19 forms a complex with S13 that binds strongly to the 16S ribosomal RNA. The protein is Small ribosomal subunit protein uS19 of Acidovorax sp. (strain JS42).